A 100-amino-acid polypeptide reads, in one-letter code: MPFWVEVRINNLDEGDISALENNFTQNFNNLIDQNKEIIKYIIQKVKTQSYLEGKLHPFYYINLIDTNDLHKPCFLTKFGLKSRFTREEKGYIVIEGHYH.

In Bos taurus (Bovine), this protein is Protein alpha-2.